Here is a 2641-residue protein sequence, read N- to C-terminus: MGIKLRRLTAGICLVTQLAFPMAAAAQGVVNAATPQPVPAQIAIANANTVPYILGALESAQSVAERFGISVAELRKLNQFRTFARGFDNVRQGDELDVPAQVSEKKLTPPPGNSSDNLEQQIASTSQQIGSLLAEDMNSEQAANMARGWASSQASGVMTDWLSRFGTARITLGVDEDFSLKNSQFDFLHPRYETPDNLFFSQHTLHRTDERTQINNGLGWRHFTPTWMSGINFFFDHDLSRYHSRAGIGAEYWRDYLKLSSNGYLRLTNWRSAPELDNDYEARPANGWDVRAEGWLPAWPHLGGKLVYEQYYGDEVALFDKDDRQSNPHAITAGLNYTPFPLMTFSAEQRQGKQGENDTRFAVDFTWQPGSAMQKQLDPNEVAARRSLAGSRYDLVDRNNNIVLEYRKKELVRLTLTDPVTGKSGEVKSLVSSLQTKYALKGYNVEATALEAAGGKVVTTGKDILVTLPGYRFTSTPETDNTWPIEVTAEDVKGNFSNREQSMVVVQAPALSQKDSSVSLSTQTLSADSHSTATLTFIAHDAAGNPVIGLVLSTRHEGVQDITLSDWKDNGDGSYTQVLTTGAMSGTLTLMPQLNGVDAAKAPAVVNIISVSSSRTHSSIKIDKDRYLSGNPIEVTVELRDENDKPVKEQKQQLNTAVSIDNVKPGVTTDWKETADGVYKATYTAYTKGSGLTAKLLMQNWNEDLHTAGFIIDANPQSAKIATLSASNNGVLANENAANTVSVNVADEGSNPINDHTVTFAVLNGSATSFNNQNTAKTDVNGLATFDLKSSKQEDNTVEVTLENGVKQTLIVSFVGDSSTAQVDLQKSKNEVVADGNDSATMTATVRDAKGNLLNDVKVTFNVNSAEAKLSQTEVNSHDGIATATLTSLKNGDYRVTASVSSGSQANQQVNFIGDQSTAALTLSVPSGDITVTNTAPQHMTATLQDKNGNPLKDKEITFTVPNDVASRFSISNGGKGMTDSNGVAIASLTGTLAGTHMITARLANSNVSDTQPMTFVADKDSAVVVLQTSKAEIIGNGVDETTLTATVKDPFDNVVKNLSVVFRTSPADTQLSLNTRNTNENGIAEVTLKGTVLGVHTAEAILLNGNRDTKTVNIAPDTSNAQVTLNIPAQQVVTNNSDSVQLTATVKDPSNHPVAGITVNFTMPQDVAANFTLENNGIAITQANGEAHVTLKGKKAGTHTVTATLGNNNASDAQPVTFVADKDSAVVVLQTSKAEIIGNGVDETTLTATVKDPFDNVVIDLPVTFSTNPADTQLSQSTSNTNDSGVAEVTLKGTVLGVHTAEATLPNGNNDTKTVNIAPDASNAQVTLNIPAQQVVTNNSDSVQLTATVKDPSNHPVAGITVNFTMPQDVAANFTLENNGIAITQANGEAHVTLKGKKAGTHTVTVTLSNNNTSDSQPVTFVADKTSAQVVLQISKNEITGNGVDSATLTATVKDQFDNEVNNLPVTFSTASSGLTLTPGESNTNESGIAQATLAGVAFGEQTVTASLANTGASDNKTVHFIGDTAAAKIIELTPVPDSIFAGTPQNSTGSVITATVVDNNGFPVKGVTVNFTSRTNSAEMTNGGQAVTNEQGKATVTYTNTRSSIESGARPDTVEASLENGSSTLSTSINVNADASTAHLTLLHALFDTVSAGETTSLYIEVKDNYGNGVPQHQVTLSVSPSEGVTPSNNGIYTTNYYGNFYASFTATKAGVYQVTATLENGDSMQQTVTYVPNVANAEISLAASKDPVIADNNDLTTLTATVADTEGNAIANTEVTFTLPEDVRANFTLSDGGKAITDTEGKAKVTLKGTKAGAHTVTASMAGGKSGQLVVNFTADTLTAQVNLNVTEDNFIANNVGMTTLQATVTDGNGNPLANEAVTFTLPADVSASFTLGQGGSAITDINGKAEVTLSGTKSGTYPVTVSVNNYGVSDTKQVTLIADAGTAKLTSLTSVYSFVVSTTEGATMTASVTDANGNPVEGIKVNFRGTSVTLSSTSVETDSQGFAEILVTSTEVGLKTVSASLADKPTEVISRLLNASADVNSATFTSLEIPEGQVMVAQDVAVKAHVNDQFGNPVAHQPVTFSAEPSSQMIISQNTVSTNTQGIAEVTMTPERNGSYMVKASLANGASIEKQLEAIDEKLTLTASSPLIGVNSPTGATLTATLTSANGTPVEGQVINFSVTPEGATLSGGKVRTNSSGQAPVVLTSNKVGTYTVTASFHNGVTIQTQTTVKVTGNSSTAHVASFIADPSTIAATNSDLSTLKATVEDGSGNLIEGLTVYFALKSGSATLTTLTAVTDQNGIATTSVKGAMTGSVTVSAVTTAGGMQTVDITLVAGPADASQSVLKNNRSSLKGDYTDSAELHLVLYDISGNPIKVSEGMEFVQSGTNVPYVKISAIDYSQNINGDYKATVTGGGEGIATLIPVLNGVHQAGLSTTIQFTRAEDKIMSGTVLVNGANLPTTTFPSQGFTGAYYQLNNDNFAPGKTAADYEFSSSGSWVDVDATGKVTFKNVGSKWERITATPKTGGPSYIYEIRVKSWWVNAGDAFMIYSLAENFCSSNGYTLPLGDHLNHSRSRGIGSLYSEWGDMGHYTTEAGFQSNMYWSSSPANSSEQYVISLATGEQSVYEKLGFAHATCYKNL.

Residues 1 to 26 (MGIKLRRLTAGICLVTQLAFPMAAAA) form the signal peptide. A LysM domain is found at 50-98 (VPYILGALESAQSVAERFGISVAELRKLNQFRTFARGFDNVRQGDELDV). The disordered stretch occupies residues 99–118 (PAQVSEKKLTPPPGNSSDNL). The segment at 125–400 (TSQQIGSLLA…SRYDLVDRNN (276 aa)) is inverse autotransporter. The tract at residues 513 to 605 (QKDSSVSLST…GVDAAKAPAV (93 aa)) is invasin 3 domain. Big-1 domains are found at residues 617-711 (HSSI…AGFI), 721-815 (IATL…VSFV), 822-913 (QVDL…VNFI), 920-1017 (ALTL…MTFV), 1024-1116 (VVVL…VNIA), 1123-1220 (QVTL…VTFV), 1227-1319 (VVVL…VNIA), 1326-1423 (QVTL…VTFV), 1430-1523 (QVVL…VHFI), 1531-1633 (IIEL…SINV), 1641-1734 (HLTL…VTYV), 1741-1837 (EISL…VNFT), 1844-1941 (QVNL…VTLI), 1948-2032 (KLTS…PTEV), 2048-2139 (FTSL…LEAI), 2142-2236 (KLTL…VKVT), and 2244-2336 (VASF…ITLV). Positions 2538-2641 (KSWWVNAGDA…FAHATCYKNL (104 aa)) are C-type lectin domain.

This sequence belongs to the intimin/invasin family.

The protein resides in the cell outer membrane. Its function is as follows. A probable inverse autotransporter, it may be involved in biofilm formation and cell adhesion. May bind peptidoglycan via its LysM domain. Upon overexpression shows increased mature biofilm formation. The sequence is that of Inverse autotransporter adhesin YeeJ from Escherichia coli O17:K52:H18 (strain UMN026 / ExPEC).